The following is a 502-amino-acid chain: Keratin, type II microfibrillar, component 5 (502 aa).

Position 1 is a blocked amino end (Ser) (Ser-1). Positions 1–122 are head; it reads SCRSYRISPG…PNAQCVKHQE (122 aa). The IF rod domain maps to 122 to 433; the sequence is EKEQIKNLNS…RLLEGEEQRL (312 aa). The tract at residues 123–157 is coil 1A; it reads KEQIKNLNSRFAAFIDKVRFLEQQNKLLETKWQFY. Positions 158–167 are linker 1; sequence QNQRCCESNL. The segment at 168–268 is coil 1B; the sequence is EPLFNGYIET…YDEEIQILNA (101 aa). Lys-228 participates in a covalent cross-link: Glycyl lysine isopeptide (Lys-Gly) (interchain with G-Cter in SUMO1). The segment at 269-285 is linker 12; that stretch reads HISDTSVIVKMDNSRDL. A coil 2 region spans residues 286 to 429; that stretch reads NMDCVVAEIK…ATYRRLLEGE (144 aa). A tail region spans residues 430–502; the sequence is EQRLCEGVGS…CGSSRSVRFA (73 aa).

The protein belongs to the intermediate filament family. Hard keratin wool.

Functionally, wool microfibrillar keratin. The sequence is that of Keratin, type II microfibrillar, component 5 from Ovis aries (Sheep).